Reading from the N-terminus, the 123-residue chain is WAP four-disulfide core domain protein 5 (123 aa).

The signal sequence occupies residues 1-24 (MRIQSLLLLGVLLAVGSQLPAAFG). 2 consecutive WAP domains span residues 27–73 (KGEK…CVPR) and 74–121 (ISVK…RDPA). Cystine bridges form between Cys34-Cys62, Cys41-Cys66, Cys49-Cys61, Cys55-Cys70, Cys81-Cys109, Cys88-Cys113, Cys96-Cys108, and Cys102-Cys117.

Its subcellular location is the secreted. Putative acid-stable proteinase inhibitor. This Callithrix jacchus (White-tufted-ear marmoset) protein is WAP four-disulfide core domain protein 5 (WFDC5).